Reading from the N-terminus, the 111-residue chain is Large ribosomal subunit protein uL22 (111 aa).

Belongs to the universal ribosomal protein uL22 family. In terms of assembly, part of the 50S ribosomal subunit.

In terms of biological role, this protein binds specifically to 23S rRNA; its binding is stimulated by other ribosomal proteins, e.g. L4, L17, and L20. It is important during the early stages of 50S assembly. It makes multiple contacts with different domains of the 23S rRNA in the assembled 50S subunit and ribosome. Its function is as follows. The globular domain of the protein is located near the polypeptide exit tunnel on the outside of the subunit, while an extended beta-hairpin is found that lines the wall of the exit tunnel in the center of the 70S ribosome. This is Large ribosomal subunit protein uL22 from Acholeplasma laidlawii (strain PG-8A).